A 255-amino-acid polypeptide reads, in one-letter code: MAVGKNKRLSKGKKGLKKRTQDPFSRKDEYSVKAPSTFAVRDVGKTLVNRTTGLKNANDSLKGRIFEVSLADLQNDEDHAFRKVKLRVDEVQGKNCLTNFHGLDFTSDKLRSLVRKWQTLIEANVTVKTTDDYLLRLFAIAFTKRRPNQIKKTTYARSSQIRAIRKKITEIIQREASTRTLAQLTKLIPEVIGREIDKSTHGIYPLQNVHIRKVKLLKSPKFDLGALLALHGESSTDDKGQKVEREFKEQVLESV.

A compositionally biased stretch (basic residues) spans 1–18 (MAVGKNKRLSKGKKGLKK). The segment at 1 to 28 (MAVGKNKRLSKGKKGLKKRTQDPFSRKD) is disordered. Position 2 is an N-acetylalanine; partial (alanine 2). Positions 19 to 28 (RTQDPFSRKD) are enriched in basic and acidic residues.

The protein belongs to the eukaryotic ribosomal protein eS1 family. As to quaternary structure, component of the small ribosomal subunit. Mature ribosomes consist of a small (40S) and a large (60S) subunit. The 40S subunit contains about 33 different proteins and 1 molecule of RNA (18S). The 60S subunit contains about 49 different proteins and 3 molecules of RNA (25S, 5.8S and 5S).

The protein resides in the cytoplasm. This chain is Small ribosomal subunit protein eS1, found in Ajellomyces capsulatus (strain H143) (Darling's disease fungus).